The primary structure comprises 397 residues: MKFNKVKLVIHACVLLFIIISIALIFHRLQTKTHSIDPIHKETKLSDNEKYLVDRNKEKVAPSKLKEVYNSKDPKYKKIDKYLQSSLFNGSVAIYENGKLKMSKGYGYQDFEKGIKNTPNTMFLIGSAQKFSTGLLLKQLEEEHKININDPVSKYLPWFKTSKPIPLKDLMLHQSGLYKYKSSKDYKNLDQAVKAIQKRGIDPKKYKKHMYNDGNYLVLAKVIEEVTGKSYAENYYTKIGDPLKLQHTAFYDEQPFKKYLAKGYAYNSTGLSFLRPNILDQYYGAGNLYMTPTDMGKLITQIQQYKLFSPKITNPLLHEFGTKQYPDEYRYGFYAKPTLNRLNGGFFGQVFTVYYNDKYVVVLALNVKGNNEVRIKHIYNDILKQNKPYNTKGVIVQ.

The signal sequence occupies residues 1 to 23 (MKFNKVKLVIHACVLLFIIISIA).

It localises to the cell membrane. The enzyme catalyses [(4-D-Ala)-(2-GlcNAc)-Rib-ol-P]n-[Gro-P]m-beta-D-ManNAc-(1-&gt;4)-alpha-D-GlcNAc-P-peptidoglycan + n H2O = [(2-GlcNAc)-Rib-ol-P]n-[Gro-P]m-beta-D-ManNAc-(1-&gt;4)-alpha-D-GlcNAc-P-peptidoglycan + n D-alanine.. Its function is as follows. Catalyzes the liberation of D-alanyl moieties present on wall teichoic acid (WTA) and lipoteichoic acid (LTA). Affects the methicillin resistance level and autolysis in the presence of Triton X-100 as well as the cell wall structure. The sequence is that of Teichoic acid D-alanine hydrolase (fmtA) from Staphylococcus aureus (strain Mu50 / ATCC 700699).